We begin with the raw amino-acid sequence, 480 residues long: MAGAGPAPGLPGAGGPVVPGPGAGIPGKSGEERLKEMEAEMALFEQEVLGAPVPGIPTAVPAVPTVPTVPTVEAMQVPAAPVIRPIIATNTYQQVQQTLEARAAAAATVVPPMVGGPPFVGPVGFGPGDRSHLDSPEAREAMFLRRAAVAPQRAPILRPAFVPHVLQRADSALSSAAAGPRPMALRPPHQALVGPPLPGPPGPPMMLPPMARAPGPPLGSMAALRPPLEEPAAPRELGLGLGLGLKEKEEAVVAAAAGLEEASAAVAVGAGGAPAGPAVIGPSLPLALAMPLPEPEPLPLPLEVVRGLLPPLRIPELLSLRPRPRPPRPEPPPGLMALEVPEPLGEDKKKGKPEKLKRCIRTAAGSSWEDPSLLEWDADDFRIFCGDLGNEVNDDILARAFSRFPSFLKAKVIRDKRTGKTKGYGFVSFKDPSDYVRAMREMNGKYVGSRPIKLRKSMWKDRNLDVVRKKQKEKKKLGLR.

The disordered stretch occupies residues 1-30 (MAGAGPAPGLPGAGGPVVPGPGAGIPGKSG). A2 carries the N-acetylalanine modification. Gly residues predominate over residues 11–27 (PGAGGPVVPGPGAGIPG). Residue S135 is modified to Phosphoserine. Asymmetric dimethylarginine is present on residues R153, R158, R168, and R181. The tract at residues 236 to 480 (ELGLGLGLGL…QKEKKKLGLR (245 aa)) is necessary for interaction with HNRNPK. Residues 319–356 (SLRPRPRPPRPEPPPGLMALEVPEPLGEDKKKGKPEKL) are disordered. Residues 345–356 (GEDKKKGKPEKL) are compositionally biased toward basic and acidic residues. In terms of domain architecture, RRM spans 381-459 (FRIFCGDLGN…RPIKLRKSMW (79 aa)).

Belongs to the RRM RBM42 family. As to quaternary structure, interacts with HNRNPK.

It is found in the nucleus. Its subcellular location is the cytoplasm. Functionally, binds (via the RRM domain) to the 3'-untranslated region (UTR) of CDKN1A mRNA. This Homo sapiens (Human) protein is RNA-binding protein 42 (RBM42).